A 335-amino-acid chain; its full sequence is UPF0065 protein BB4329 (335 aa).

A signal peptide spans 1 to 39 (MNKNIPAFHRRCHGLVQGLARTLLLAPVLLALSVPAAQA).

Belongs to the UPF0065 (bug) family.

The protein resides in the periplasm. The chain is UPF0065 protein BB4329 from Bordetella bronchiseptica (strain ATCC BAA-588 / NCTC 13252 / RB50) (Alcaligenes bronchisepticus).